Here is a 297-residue protein sequence, read N- to C-terminus: GTP-binding protein REM 1 (297 aa).

Positions 1–10 (MTLNTQQEAK) are enriched in polar residues. The interval 1–73 (MTLNTQQEAK…DGWSSESSDS (73 aa)) is disordered. Serine 51 is subject to Phosphoserine. Over residues 64 to 73 (DGWSSESSDS) the composition is skewed to low complexity. GTP contacts are provided by residues 87 to 94 (GDPGVGKT) and 194 to 197 (NKAD). Positions 267-286 (ARRFLARLTARSARRRALKA) are calmodulin-binding.

It belongs to the small GTPase superfamily. RGK family. In terms of assembly, in vitro, interacts with calmodulin in a calcium-dependent manner. Interacts 14-3-3 family members including YWHAE, YWHAH, YWHAQ, YWHAZ in a phosphorylation-dependent manner. High expression in cardiac muscle. Moderate expression in lung, skeletal muscle and kidney. Low levels in spleen and brain.

Functionally, promotes endothelial cell sprouting and actin cytoskeletal reorganization. May be involved in angiogenesis. May function in Ca(2+) signaling. The protein is GTP-binding protein REM 1 (Rem1) of Mus musculus (Mouse).